The following is a 321-amino-acid chain: MISGSVRFLVNLESLNGVESIGNLTKHRTAPVVLKTSTGYLVRYVPVISGEALAHAYQASLVDIAKKEGLPVGSLSSQYEFIKFSTDEALKIEGIKEPKDYNDARRFEVEVMLKDVIADVGGFMYAGGAPVRRTSRIKLGYMIPALRGDEIPAQLEAQFHVRFSNKPVSGSQAIFNVEVSSALYTFSFELDEDLIAVPSTFGEKVKGEEELERQKAKRVKSAIKALYSLLSGNFGGKRSRFLPSMKLMSLVVTKTDFPFMPEPAHDDDYIKTTIMRLGKAKGVLNGNLAKAYVINNEGIEVGEGVTVLSTVEDLVVKLEEE.

It belongs to the CRISPR-associated protein Cas7/Cst2/DevR family. Subtype I-a/Apern subfamily. As to quaternary structure, part of the aCascade ribonucleoprotein complex, minimally composed of Csa2 and Cas5a, which binds crRNA. Other possible components of aCascade in strain P1 are Cas6b (SSO1437) and Csa5 (SSO1443), while SSO1399, Cas5b (SSO1400) and SSO1401 have sometimes been seen weakly associated. Csa2 is probably the major RNA-binding subunit. The Csa2-Cas5a-crRNA complex also binds target DNA homologous to crRNA, probably forming an R-loop. Purified aCascade forms a filament about 6 nm in width.

Functionally, CRISPR (clustered regularly interspaced short palindromic repeat) is an adaptive immune system that provides protection against mobile genetic elements (viruses, transposable elements and conjugative plasmids). CRISPR clusters contain spacers, sequences complementary to antecedent mobile elements, and target invading nucleic acids. CRISPR clusters are transcribed and processed into CRISPR RNA (crRNA). The polypeptide is CRISPR-associated aCascade subunit Cas7/Csa2 2 (csa2b) (Saccharolobus solfataricus (strain ATCC 35092 / DSM 1617 / JCM 11322 / P2) (Sulfolobus solfataricus)).